We begin with the raw amino-acid sequence, 196 residues long: Probable GTP-binding protein EngB (196 aa).

In terms of domain architecture, EngB-type G spans 21-195 (DVSEICLIGR…YELINKLLGS (175 aa)). Residues 29-36 (GRSNVGKS), 56-60 (GKTRL), 75-78 (DAPG), 142-145 (TKLD), and 174-176 (ISN) contribute to the GTP site. Mg(2+) contacts are provided by Ser-36 and Thr-58.

The protein belongs to the TRAFAC class TrmE-Era-EngA-EngB-Septin-like GTPase superfamily. EngB GTPase family. The cofactor is Mg(2+).

In terms of biological role, necessary for normal cell division and for the maintenance of normal septation. The polypeptide is Probable GTP-binding protein EngB (Mycoplasma capricolum subsp. capricolum (strain California kid / ATCC 27343 / NCTC 10154)).